A 761-amino-acid chain; its full sequence is BMP/retinoic acid-inducible neural-specific protein 1 (761 aa).

Positions 1–22 (MNWRLVEFLYLLFIWDHILVQP) are cleaved as a signal peptide. In terms of domain architecture, MACPF spans 68 to 251 (RYKIYREFAR…FVQSALSYIM (184 aa)). 7 N-linked (GlcNAc...) asparagine glycosylation sites follow: N156, N433, N443, N553, N599, N631, and N677.

It belongs to the BRINP family.

It is found in the cytoplasm. Functionally, plays a role in neurogenesis and brain development. May suppress cell cycle progression in postmitotic neurons by inhibiting G1/S transition. The polypeptide is BMP/retinoic acid-inducible neural-specific protein 1 (BRINP1) (Gallus gallus (Chicken)).